A 372-amino-acid polypeptide reads, in one-letter code: Probable O-methyltransferase 2 (372 aa).

Residues Gly-216, Asp-259, and Lys-273 each contribute to the S-adenosyl-L-methionine site. Catalysis depends on His-277, which acts as the Proton acceptor.

The protein belongs to the class I-like SAM-binding methyltransferase superfamily. Cation-independent O-methyltransferase family. COMT subfamily. In terms of assembly, homodimer. In terms of tissue distribution, expressed predominantly in root hairs.

In terms of biological role, O-methyltransferase of unknown substrate specificity. Not active on resorcinol, orcinol, guaiacol, eugenol, ferulic acid, p-coumaric acid, catechol, caffeic acid or monomethyl ethers of resorcinol or orcinol. This is Probable O-methyltransferase 2 (OMT2) from Sorghum bicolor (Sorghum).